The sequence spans 502 residues: 4,4'-diapophytoene desaturase (4,4'-diaponeurosporene-forming) (502 aa).

5 to 17 provides a ligand contact to FAD; that stretch reads VIGAGVTGLAAAA.

The protein belongs to the carotenoid/retinoid oxidoreductase family. CrtN subfamily.

It carries out the reaction 15-cis-4,4'-diapophytoene + 3 FAD + 3 H(+) = all-trans-4,4'-diaponeurosporene + 3 FADH2. Its pathway is carotenoid biosynthesis; staphyloxanthin biosynthesis; staphyloxanthin from farnesyl diphosphate: step 2/5. In terms of biological role, involved in the biosynthesis of the yellow-orange carotenoid staphyloxanthin, which plays a role in the virulence via its protective function against oxidative stress. Catalyzes three successive dehydrogenation reactions that lead to the introduction of three double bonds into 4,4'-diapophytoene (dehydrosqualene), with 4,4'-diapophytofluene and 4,4'-diapo-zeta-carotene as intermediates, and 4,4'-diaponeurosporene (the major deep-yellow pigment in staphylococci strains) as the end product. The polypeptide is 4,4'-diapophytoene desaturase (4,4'-diaponeurosporene-forming) (Staphylococcus aureus (strain USA300)).